The primary structure comprises 203 residues: Urease accessory protein UreG (203 aa).

Residue 14 to 21 (GPVGSGKT) participates in GTP binding.

It belongs to the SIMIBI class G3E GTPase family. UreG subfamily. As to quaternary structure, homodimer. UreD, UreF and UreG form a complex that acts as a GTP-hydrolysis-dependent molecular chaperone, activating the urease apoprotein by helping to assemble the nickel containing metallocenter of UreC. The UreE protein probably delivers the nickel.

The protein localises to the cytoplasm. Its function is as follows. Facilitates the functional incorporation of the urease nickel metallocenter. This process requires GTP hydrolysis, probably effectuated by UreG. The protein is Urease accessory protein UreG of Sinorhizobium fredii (strain NBRC 101917 / NGR234).